Consider the following 663-residue polypeptide: Meiotically up-regulated gene 60 protein (663 aa).

Residues 578–644 (PAEMHFYVPE…SENLWAVRSL (67 aa)) form the KH domain.

The protein resides in the cytoplasm. It localises to the nucleus. It is found in the cytoskeleton. Its subcellular location is the microtubule organizing center. The protein localises to the spindle pole body. Functionally, has a role in meiosis. This chain is Meiotically up-regulated gene 60 protein (mug60), found in Schizosaccharomyces pombe (strain 972 / ATCC 24843) (Fission yeast).